A 124-amino-acid chain; its full sequence is Large ribosomal subunit protein bL12 (124 aa).

Belongs to the bacterial ribosomal protein bL12 family. Homodimer. Part of the ribosomal stalk of the 50S ribosomal subunit. Forms a multimeric L10(L12)X complex, where L10 forms an elongated spine to which 2 to 4 L12 dimers bind in a sequential fashion. Binds GTP-bound translation factors.

In terms of biological role, forms part of the ribosomal stalk which helps the ribosome interact with GTP-bound translation factors. Is thus essential for accurate translation. This is Large ribosomal subunit protein bL12 from Dehalococcoides mccartyi (strain ATCC BAA-2266 / KCTC 15142 / 195) (Dehalococcoides ethenogenes (strain 195)).